The chain runs to 352 residues: C-C chemokine receptor type 5 (352 aa).

Residues 1 to 30 (MDYQVSSPTYDIDYYTSEPCQKVNVKQIAA) are Extracellular-facing. Sulfotyrosine is present on Tyr3. Ser6 and Ser7 each carry an O-linked (GalNAc...) serine glycan. A sulfotyrosine mark is found at Tyr10, Tyr14, and Tyr15. Intrachain disulfides connect Cys20-Cys269 and Cys101-Cys178. Residues 31–58 (RLLPPLYSLVFIFGFVGNILVVLILINC) traverse the membrane as a helical segment. The Cytoplasmic portion of the chain corresponds to 59–68 (KRLKSMTDIY). The helical transmembrane segment at 69–89 (LLNLAISDLFFLLTVPFWAHY) threads the bilayer. Residues 90 to 102 (AAAQWDFGNTMCQ) lie on the Extracellular side of the membrane. The chain crosses the membrane as a helical span at residues 103-124 (LLTGLYFIGFFSGIFFIILLTI). The Cytoplasmic portion of the chain corresponds to 125 to 141 (DRYLAIVHAVFALKART). The helical transmembrane segment at 142–166 (VTFGVVTSVITWVVAVFASLPGIIF) threads the bilayer. The Extracellular segment spans residues 167–198 (TRSQREGLHYTCSSHFPYSQYQFWKNFQTLKI). The helical transmembrane segment at 199–218 (VILGLVLPLLVMVICYSGIL) threads the bilayer. The Cytoplasmic segment spans residues 219–235 (KTLLRCRNEKKRHRAVR). The helical transmembrane segment at 236-260 (LIFTIMIVYFLFWAPYNIVLLLNTF) threads the bilayer. The Extracellular portion of the chain corresponds to 261–277 (QEFFGLNNCSSSNRLDQ). The chain crosses the membrane as a helical span at residues 278-301 (AMQVTETLGMTHCCINPIIYAFVG). The Cytoplasmic portion of the chain corresponds to 302–352 (EKFRNYLLVFFQKHIAKRFCKCCSIFQQEAPERASSVYTRSTGEQETSVGL). 3 S-palmitoyl cysteine lipidation sites follow: Cys321, Cys323, and Cys324. Phosphoserine; by BARK1 is present on residues Ser336, Ser337, Ser342, and Ser349.

It belongs to the G-protein coupled receptor 1 family. As to quaternary structure, interacts with PRAF2. Efficient ligand binding to CCL3/MIP-1alpha and CCL4/MIP-1beta requires sulfation, O-glycosylation and sialic acid modifications. Glycosylation on Ser-6 is required for efficient binding of CCL4. Interacts with GRK2. Interacts with ARRB1 and ARRB2. Interacts with CNIH4. Interacts with S100A4; this interaction stimulates T-lymphocyte chemotaxis. In terms of processing, sulfated on at least 2 of the N-terminal tyrosines. Sulfation is required for efficient binding of the chemokines, CCL3 and CCL4. Post-translationally, palmitoylation in the C-terminal is important for cell surface expression. Phosphorylation on serine residues in the C-terminal is stimulated by binding CC chemokines especially by APO-RANTES. In terms of processing, O-glycosylated, but not N-glycosylated. Ser-6 appears to be the major site even if Ser-7 may be also O-glycosylated. Also sialylated glycans present which contribute to chemokine binding. Thr-16 and Ser-17 may also be glycosylated and, if so, with small moieties such as a T-antigen.

It is found in the cell membrane. Receptor for a number of inflammatory CC-chemokines including CCL3/MIP-1-alpha, CCL4/MIP-1-beta and RANTES and subsequently transduces a signal by increasing the intracellular calcium ion level. May play a role in the control of granulocytic lineage proliferation or differentiation. Participates in T-lymphocyte migration to the infection site by acting as a chemotactic receptor. This chain is C-C chemokine receptor type 5 (CCR5), found in Trachypithecus francoisi (Francois' leaf monkey).